The sequence spans 319 residues: N-acyl-aromatic-L-amino acid amidohydrolase (carboxylate-forming) (319 aa).

The tract at residues 1 to 210 (MCSLPVPREP…TVLDFIELFN (210 aa)) is hydrolytic domain. Zn(2+) contacts are provided by His21 and Glu24. Substrate contacts are provided by residues Arg63 and 70 to 71 (NR). A Zn(2+)-binding site is contributed by His116. 2 residues coordinate substrate: Glu178 and Tyr288. Residues 211 to 318 (QGTAFPAFEM…PALTPAPSPA (108 aa)) are shielding domain.

This sequence belongs to the AspA/AstE family. Aspartoacylase subfamily. Exists as a mixture of homodimers and homotetramer, both catalytically active. As to quaternary structure, (Microbial infection) Interacts with hepatitis C virus/HCV core protein. Zn(2+) serves as cofactor.

Its subcellular location is the apical cell membrane. The protein localises to the cytoplasm. It catalyses the reaction an N-acyl-aromatic L-alpha-amino acid + H2O = an aromatic L-alpha-amino acid + a carboxylate. It carries out the reaction an N-acetyl-L-cysteine-S-conjugate + H2O = an S-substituted L-cysteine + acetate. Functionally, plays an important role in deacetylating mercapturic acids in kidney proximal tubules. Also acts on N-acetyl-aromatic amino acids. This Homo sapiens (Human) protein is N-acyl-aromatic-L-amino acid amidohydrolase (carboxylate-forming) (ACY3).